Reading from the N-terminus, the 83-residue chain is MIGLAYFLIIWLGVGLLTGIKFIFVDQVYDEEFKELMDKETAAGMERNLASLFFKNKLNVIAFFMLIGLLPLAMRITKLFKRG.

2 consecutive transmembrane segments (helical) span residues 5-25 (AYFL…FIFV) and 60-80 (VIAF…TKLF).

It is found in the cell membrane. This is SPbeta prophage-derived uncharacterized protein YopE (yopE) from Bacillus subtilis (strain 168).